A 69-amino-acid chain; its full sequence is Putative membrane protein insertion efficiency factor (69 aa).

Belongs to the UPF0161 family.

The protein resides in the cell membrane. In terms of biological role, could be involved in insertion of integral membrane proteins into the membrane. The sequence is that of Putative membrane protein insertion efficiency factor from Alkaliphilus oremlandii (strain OhILAs) (Clostridium oremlandii (strain OhILAs)).